The chain runs to 403 residues: S-adenosylmethionine synthase (403 aa).

H15 contributes to the ATP binding site. D17 contributes to the Mg(2+) binding site. E43 lines the K(+) pocket. Positions 56 and 99 each coordinate L-methionine. The segment at 99–109 (QSPDINQGVDR) is flexible loop. ATP-binding positions include 166–168 (DAK), 232–233 (KF), D241, 247–248 (RK), A264, and K268. Residue D241 participates in L-methionine binding. L-methionine is bound at residue K272.

It belongs to the AdoMet synthase family. As to quaternary structure, homotetramer; dimer of dimers. It depends on Mg(2+) as a cofactor. Requires K(+) as cofactor.

The protein resides in the cytoplasm. The catalysed reaction is L-methionine + ATP + H2O = S-adenosyl-L-methionine + phosphate + diphosphate. It functions in the pathway amino-acid biosynthesis; S-adenosyl-L-methionine biosynthesis; S-adenosyl-L-methionine from L-methionine: step 1/1. In terms of biological role, catalyzes the formation of S-adenosylmethionine (AdoMet) from methionine and ATP. The overall synthetic reaction is composed of two sequential steps, AdoMet formation and the subsequent tripolyphosphate hydrolysis which occurs prior to release of AdoMet from the enzyme. This Xanthomonas campestris pv. campestris (strain ATCC 33913 / DSM 3586 / NCPPB 528 / LMG 568 / P 25) protein is S-adenosylmethionine synthase.